Reading from the N-terminus, the 356-residue chain is Histidinol-phosphate aminotransferase (356 aa).

An N6-(pyridoxal phosphate)lysine modification is found at K214.

This sequence belongs to the class-II pyridoxal-phosphate-dependent aminotransferase family. Histidinol-phosphate aminotransferase subfamily. In terms of assembly, homodimer. Requires pyridoxal 5'-phosphate as cofactor.

The catalysed reaction is L-histidinol phosphate + 2-oxoglutarate = 3-(imidazol-4-yl)-2-oxopropyl phosphate + L-glutamate. The protein operates within amino-acid biosynthesis; L-histidine biosynthesis; L-histidine from 5-phospho-alpha-D-ribose 1-diphosphate: step 7/9. This chain is Histidinol-phosphate aminotransferase (hisC), found in Escherichia coli O157:H7.